The sequence spans 475 residues: Glutamyl-tRNA(Gln) amidotransferase subunit A (475 aa).

Active-site charge relay system residues include K69 and S144. Residue S168 is the Acyl-ester intermediate of the active site.

It belongs to the amidase family. GatA subfamily. In terms of assembly, heterotrimer of A, B and C subunits.

It catalyses the reaction L-glutamyl-tRNA(Gln) + L-glutamine + ATP + H2O = L-glutaminyl-tRNA(Gln) + L-glutamate + ADP + phosphate + H(+). In terms of biological role, allows the formation of correctly charged Gln-tRNA(Gln) through the transamidation of misacylated Glu-tRNA(Gln) in organisms which lack glutaminyl-tRNA synthetase. The reaction takes place in the presence of glutamine and ATP through an activated gamma-phospho-Glu-tRNA(Gln). The protein is Glutamyl-tRNA(Gln) amidotransferase subunit A of Methanosarcina barkeri (strain Fusaro / DSM 804).